Reading from the N-terminus, the 1131-residue chain is Phytochrome A (1131 aa).

The tract at residues 1–23 is disordered; that stretch reads MSSSRPAHSSSSSSRTRQSSRAR. The GAF domain maps to 219 to 404; sequence SMEALCNTVV…VFAVHVNKEF (186 aa). Cys324 contributes to the phytochromobilin binding site. 2 consecutive PAS domains span residues 620-690 and 750-834; these read VTSE…LQGR and VEGD…LAGE. One can recognise a Histidine kinase domain in the interval 904–1124; sequence YMRHAINKPL…TFILTAELAA (221 aa).

The protein belongs to the phytochrome family. Homodimer. Post-translationally, contains one covalently linked phytochromobilin chromophore.

Its function is as follows. Regulatory photoreceptor which exists in two forms that are reversibly interconvertible by light: the Pr form that absorbs maximally in the red region of the spectrum and the Pfr form that absorbs maximally in the far-red region. Photoconversion of Pr to Pfr induces an array of morphogenic responses, whereas reconversion of Pfr to Pr cancels the induction of those responses. Pfr controls the expression of a number of nuclear genes including those encoding the small subunit of ribulose-bisphosphate carboxylase, chlorophyll A/B binding protein, protochlorophyllide reductase, rRNA, etc. It also controls the expression of its own gene(s) in a negative feedback fashion. The polypeptide is Phytochrome A (PHYA1) (Zea mays (Maize)).